The sequence spans 422 residues: MYRVPEFYARRKRLGGQTPYLMDQLGLRLGMWYWKDETRTLEFRRFAAEDSVQWLLKHHPHFTPAAEVKEKGKKGKAVHFAETDGPASDRLTDKRLAAKDDKSAKAVEKRGQQGTITLDDVKFVTLLLLQDTEMQRICSFTTFMRNKNLDNFLMALLYYLSHYLEKNSLEKKPKSYMVGLVEKKEMELVLSELEAAQRYLAQKYCILVLGLAVPDKHHMCCGKEKISDTQKDWKFFESFYTFCTYVAWIVFRRQHLTEIEEEVGRLFRTNMFNIPRRRREDEESGGEKKRMTFVQFRRMMAKRPAIKKAINMRSPVMSTLLPSLREKAQNVFEKKYHQVDVRFPAEMQKHVGTLDSVPMPVVGILGEPRCLFNPHTLHPLDPEENTKSFGRYPSLMENNNMRIQDTLDLVMKTLSSHTSCPK.

In terms of assembly, interacts with PPP1CA.

Its function is as follows. Inhibits phosphatase activity of protein phosphatase 1 (PP1) complexes. This is Protein phosphatase 1 regulatory subunit 36 (PPP1R36) from Homo sapiens (Human).